The primary structure comprises 60 residues: Myrmicitoxin(1)-Pr4a (60 aa).

A signal peptide spans 1–23 (MKAIIFLFAVLTVVAIIIPIISG). Residues 24–33 (EPNAGPHAAS) constitute a propeptide that is removed on maturation. Gln59 carries the glutamine amide modification.

It belongs to the formicidae venom clade 2 family. In terms of tissue distribution, expressed by the venom gland.

It is found in the secreted. Toxin that causes a rapid and irreversible paralysis when intrathoracically injected into insects (blowflies). Does not cause spontaneous nocifensive behaviors by intraplantar injection in mice. In Pogonomyrmex rugosus (Desert harvester ant), this protein is Myrmicitoxin(1)-Pr4a.